The primary structure comprises 180 residues: Large ribosomal subunit protein uL22 (180 aa).

The interval Val-111 to Asp-180 is disordered. Residues Pro-142–Pro-166 show a composition bias toward basic residues. The segment covering Glu-171–Asp-180 has biased composition (basic and acidic residues).

Belongs to the universal ribosomal protein uL22 family. Part of the 50S ribosomal subunit.

In terms of biological role, this protein binds specifically to 23S rRNA; its binding is stimulated by other ribosomal proteins, e.g. L4, L17, and L20. It is important during the early stages of 50S assembly. It makes multiple contacts with different domains of the 23S rRNA in the assembled 50S subunit and ribosome. Its function is as follows. The globular domain of the protein is located near the polypeptide exit tunnel on the outside of the subunit, while an extended beta-hairpin is found that lines the wall of the exit tunnel in the center of the 70S ribosome. The chain is Large ribosomal subunit protein uL22 from Mycobacterium avium (strain 104).